A 71-amino-acid polypeptide reads, in one-letter code: Small ribosomal subunit protein eS17 (71 aa).

The protein belongs to the eukaryotic ribosomal protein eS17 family.

The chain is Small ribosomal subunit protein eS17 from Pyrobaculum aerophilum (strain ATCC 51768 / DSM 7523 / JCM 9630 / CIP 104966 / NBRC 100827 / IM2).